The primary structure comprises 589 residues: Monocopper oxidase-like protein SKS1 (589 aa).

Positions 1–24 (MAATCSLLASFLLCFALLSAVSFA) are cleaved as a signal peptide. 10 N-linked (GlcNAc...) asparagine glycosylation sites follow: Asn-62, Asn-111, Asn-204, Asn-243, Asn-260, Asn-296, Asn-345, Asn-365, Asn-433, and Asn-447. The segment at 322-356 (LPVPKTDVSSPWSAMSQPKTIRQNTSASGARPNPQ) is disordered. Residues 328–349 (DVSSPWSAMSQPKTIRQNTSAS) are compositionally biased toward polar residues. His-455 provides a ligand contact to Cu cation. The GPI-anchor amidated serine moiety is linked to residue Ser-563. A propeptide spans 564-589 (AATSILNGHLKLMLLMVLLASVFRFC) (removed in mature form).

Belongs to the multicopper oxidase family. The cofactor is Cu cation.

The protein localises to the cell membrane. The polypeptide is Monocopper oxidase-like protein SKS1 (SKS1) (Arabidopsis thaliana (Mouse-ear cress)).